The following is a 429-amino-acid chain: Serine--tRNA ligase (429 aa).

Threonine 229–glutamate 231 is an L-serine binding site. Arginine 260–glutamate 262 lines the ATP pocket. Glutamate 283 is an L-serine binding site. Residue glutamate 347–serine 350 participates in ATP binding. Position 383 (serine 383) interacts with L-serine.

This sequence belongs to the class-II aminoacyl-tRNA synthetase family. Type-1 seryl-tRNA synthetase subfamily. In terms of assembly, homodimer. The tRNA molecule binds across the dimer.

The protein localises to the cytoplasm. The enzyme catalyses tRNA(Ser) + L-serine + ATP = L-seryl-tRNA(Ser) + AMP + diphosphate + H(+). The catalysed reaction is tRNA(Sec) + L-serine + ATP = L-seryl-tRNA(Sec) + AMP + diphosphate + H(+). It functions in the pathway aminoacyl-tRNA biosynthesis; selenocysteinyl-tRNA(Sec) biosynthesis; L-seryl-tRNA(Sec) from L-serine and tRNA(Sec): step 1/1. Functionally, catalyzes the attachment of serine to tRNA(Ser). Is also able to aminoacylate tRNA(Sec) with serine, to form the misacylated tRNA L-seryl-tRNA(Sec), which will be further converted into selenocysteinyl-tRNA(Sec). This is Serine--tRNA ligase from Orientia tsutsugamushi (strain Ikeda) (Rickettsia tsutsugamushi).